The following is an 837-amino-acid chain: Dapper homolog 2 (837 aa).

A coiled-coil region spans residues 65–113 (ENVSKEELRLEATLSLLKQQLTRLRRQDVGLKTHLQQLDQQITELKLDV). 5 disordered regions span residues 189-265 (ADES…PKYQ), 424-497 (HGKH…DKSS), 512-564 (GSQR…KQSG), 600-649 (QQIP…HTQR), and 738-782 (EMSD…EDEG). Polar residues-rich tracts occupy residues 246–265 (VKSS…PKYQ) and 432–445 (LDLQ…NNTA). 3 stretches are compositionally biased toward basic and acidic residues: residues 456-466 (ASEKRSGHFPK), 486-496 (EGSRASCHDKS), and 548-560 (LSRE…RTDL). Over residues 741-759 (DYTTNRFGDSESSQGSQTA) the composition is skewed to polar residues. Residues 768–782 (LDEEDLLEEEEEDEG) are compositionally biased toward acidic residues. The PDZ-binding motif lies at 834–837 (MTLV).

This sequence belongs to the dapper family. Interacts with dvl2.

It is found in the cytoplasm. Its subcellular location is the late endosome. The protein resides in the nucleus. The protein localises to the cell membrane. In terms of biological role, involved in regulation of intracellular signaling pathways during development. Specifically thought to play a role in canonical and/or non-canonical Wnt signaling pathways through interaction with DSH (Dishevelled) family proteins. Positive regulator of the Wnt signaling pathway which acts downstream of wnt1 indicative for non-canonical Wnt signaling. Also negatively regulates the Nodal signaling pathway, possibly by promoting the lysosomal degradation of Nodal receptors. Required for convergent extension movements in gastrulation. This chain is Dapper homolog 2 (dact2), found in Danio rerio (Zebrafish).